The chain runs to 329 residues: DNA-directed RNA polymerase subunit alpha (329 aa).

The interval 1 to 235 is alpha N-terminal domain (alpha-NTD); the sequence is MQGSVTEFLK…EQLDAFVDLR (235 aa). The tract at residues 249-329 is alpha C-terminal domain (alpha-CTD); that stretch reads FDPILLRPVD…NWPPASIAED (81 aa).

The protein belongs to the RNA polymerase alpha chain family. In terms of assembly, homodimer. The RNAP catalytic core consists of 2 alpha, 1 beta, 1 beta' and 1 omega subunit. When a sigma factor is associated with the core the holoenzyme is formed, which can initiate transcription.

The catalysed reaction is RNA(n) + a ribonucleoside 5'-triphosphate = RNA(n+1) + diphosphate. DNA-dependent RNA polymerase catalyzes the transcription of DNA into RNA using the four ribonucleoside triphosphates as substrates. The sequence is that of DNA-directed RNA polymerase subunit alpha from Aliivibrio salmonicida (strain LFI1238) (Vibrio salmonicida (strain LFI1238)).